The primary structure comprises 61 residues: Small ribosomal subunit protein uS14 (61 aa).

Zn(2+) contacts are provided by cysteine 24, cysteine 27, cysteine 40, and cysteine 43.

It belongs to the universal ribosomal protein uS14 family. Zinc-binding uS14 subfamily. Part of the 30S ribosomal subunit. Contacts proteins S3 and S10. The cofactor is Zn(2+).

Functionally, binds 16S rRNA, required for the assembly of 30S particles and may also be responsible for determining the conformation of the 16S rRNA at the A site. The polypeptide is Small ribosomal subunit protein uS14 (Mycobacterium avium (strain 104)).